A 230-amino-acid polypeptide reads, in one-letter code: Flagellar L-ring protein (230 aa).

Residues 1–15 form the signal peptide; that stretch reads MSRPPLLSSACLAAT. Cys-16 is lipidated: N-palmitoyl cysteine. Cys-16 carries the S-diacylglycerol cysteine lipid modification.

It belongs to the FlgH family. As to quaternary structure, the basal body constitutes a major portion of the flagellar organelle and consists of four rings (L,P,S, and M) mounted on a central rod.

It is found in the cell outer membrane. The protein resides in the bacterial flagellum basal body. Its function is as follows. Assembles around the rod to form the L-ring and probably protects the motor/basal body from shearing forces during rotation. This is Flagellar L-ring protein from Xanthomonas oryzae pv. oryzae (strain MAFF 311018).